The following is a 516-amino-acid chain: 3-phosphoshikimate 1-carboxyvinyltransferase, chloroplastic (516 aa).

The N-terminal 72 residues, 1–72, are a transit peptide targeting the chloroplast; that stretch reads MAQSSRICHG…KVTASVSTSE (72 aa). 3-phosphoshikimate-binding residues include lysine 95, serine 96, and arginine 100. Residue lysine 95 coordinates phosphoenolpyruvate. Phosphoenolpyruvate contacts are provided by glycine 173 and arginine 203. 3-phosphoshikimate contacts are provided by serine 250, serine 251, glutamine 252, serine 278, aspartate 403, and lysine 430. Glutamine 252 provides a ligand contact to phosphoenolpyruvate. Aspartate 403 acts as the Proton acceptor in catalysis. Phosphoenolpyruvate-binding residues include arginine 434, arginine 476, and lysine 501.

The protein belongs to the EPSP synthase family.

The protein resides in the plastid. It is found in the chloroplast. It carries out the reaction 3-phosphoshikimate + phosphoenolpyruvate = 5-O-(1-carboxyvinyl)-3-phosphoshikimate + phosphate. It functions in the pathway metabolic intermediate biosynthesis; chorismate biosynthesis; chorismate from D-erythrose 4-phosphate and phosphoenolpyruvate: step 6/7. Functionally, catalyzes the transfer of the enolpyruvyl moiety of phosphoenolpyruvate (PEP) to the 5-hydroxyl of shikimate-3-phosphate (S3P) to produce enolpyruvyl shikimate-3-phosphate and inorganic phosphate. The sequence is that of 3-phosphoshikimate 1-carboxyvinyltransferase, chloroplastic from Brassica napus (Rape).